The primary structure comprises 334 residues: Tryptophan--tRNA ligase (334 aa).

Residues 11 to 13 and 19 to 20 contribute to the ATP site; these read QPS and GN. Residues 12 to 20 carry the 'HIGH' region motif; it reads PSGELTIGN. Residue aspartate 135 participates in L-tryptophan binding. Residues 147–149, valine 186, and 195–199 each bind ATP; these read GED and KMSKS. A 'KMSKS' region motif is present at residues 195 to 199; it reads KMSKS.

It belongs to the class-I aminoacyl-tRNA synthetase family. As to quaternary structure, homodimer.

Its subcellular location is the cytoplasm. The enzyme catalyses tRNA(Trp) + L-tryptophan + ATP = L-tryptophyl-tRNA(Trp) + AMP + diphosphate + H(+). Catalyzes the attachment of tryptophan to tRNA(Trp). This is Tryptophan--tRNA ligase from Shigella flexneri.